We begin with the raw amino-acid sequence, 432 residues long: Asparagine--tRNA ligase (432 aa).

It belongs to the class-II aminoacyl-tRNA synthetase family. Homodimer.

The protein resides in the cytoplasm. It carries out the reaction tRNA(Asn) + L-asparagine + ATP = L-asparaginyl-tRNA(Asn) + AMP + diphosphate + H(+). This Lactobacillus gasseri (strain ATCC 33323 / DSM 20243 / BCRC 14619 / CIP 102991 / JCM 1131 / KCTC 3163 / NCIMB 11718 / NCTC 13722 / AM63) protein is Asparagine--tRNA ligase.